Consider the following 577-residue polypeptide: MNKEALVNRLNASAKRQKADIVIKNGKIMDVYNQEWIYEDIAITDGVIVGLGEYEGENIIDAEGQMIVPGFIDGHVHIESSMVTPIEFAKAVLPHGVTTVVTDPHEIANVSGEKGIEFMLEQARHTPLNIHFMLPSSVPAASFERSGAILKAADLKPFYEEEEVLGLAEVMDYVSVQQAEKDMVQKLLDARVAGKRIDGHLAGLSTDLINIYRTAFVLNDHEVTSKEEALDRIRRGMYVMMREGSVAKNTLNVLPAVNEKNARRFFFCTDDKHVDDLLSEGSVNHQVKMAIQAGLNPFLAYQLGSLNAAECYGLDTKGAIAPGFDADLLFVSDLENVTVTMTMVKGQTVAEDSKAVYQDHASTAAPDQALLDSVKLAAPLNKQDFHMPIDSEQQINVIQIIPNQLETRLVQVPAPVAREFEPDTELDLLKIAVVERHKGLKETGLGVVKGFGFKSGAIATTISHDSHNIIAVGTNDEDIAAAVNKLQEIGGGLTIIKNGEELHSVPLPIAGLLSDQSAEQVNQSLLTLHDKLSLIGFTGGFNPFLTLSFLALPVIPDIKMTTTGLFDVKSFQHISLQ.

Belongs to the metallo-dependent hydrolases superfamily. Adenine deaminase family. Requires Mn(2+) as cofactor.

It carries out the reaction adenine + H2O + H(+) = hypoxanthine + NH4(+). In Bacillus subtilis (strain 168), this protein is Adenine deaminase (adeC).